Here is a 1615-residue protein sequence, read N- to C-terminus: Regulating synaptic membrane exocytosis protein 1 (1615 aa).

The tract at residues 1 to 26 is disordered; the sequence is MSSAVGPRGPRPPTVPPPMQELPDLS. Pro residues predominate over residues 9–20; sequence GPRPPTVPPPMQ. Residues 22–205 enclose the RabBD domain; the sequence is LPDLSHLTEE…TKSGAWFFGS (184 aa). The segment at 133 to 193 adopts an FYVE-type zinc-finger fold; sequence KDDAPTCGIC…VCNLCRKQQE (61 aa). Residues Cys-139, Cys-142, Cys-155, Cys-158, Cys-163, Cys-166, Cys-185, and Cys-188 each coordinate Zn(2+). A disordered region spans residues 205–569; that stretch reads SGPQQPSQDG…CEDVELESES (365 aa). The segment covering 206 to 222 has biased composition (polar residues); that stretch reads GPQQPSQDGTLSDTATG. The span at 227-240 shows a compositional bias: basic and acidic residues; sequence VPREKKARLQERSR. Residues 241-256 are compositionally biased toward polar residues; it reads SQTPLSTAAVSSQDTA. Residues 327 to 379 are compositionally biased toward basic and acidic residues; that stretch reads ADERERKERRETRRLEKGRSQDYSDRPEKRDNGRVAEDQKQRKEEEYQTRYRS. Basic residues predominate over residues 399 to 410; the sequence is MHARVSRARHER. Positions 421–459 are enriched in low complexity; sequence EAAAAAPAEATAGKRAPATARVSPPESPRARAAAAQPPT. The span at 460–475 shows a compositional bias: pro residues; that stretch reads EHGPPPPRPAPGPAEP. Residues 476–489 show a composition bias toward basic and acidic residues; the sequence is PEPRVPEPLRKQGR. Over residues 511-523 the composition is skewed to polar residues; it reads RNDSLSSDQSESV. Residue Ser-514 is modified to Phosphoserine. A compositionally biased stretch (basic residues) spans 529–541; the sequence is KPHRPKRGGKRRQ. Positions 559-569 are enriched in acidic residues; sequence SCEDVELESES. Position 592 is a phosphoserine (Ser-592). The region spanning 619 to 705 is the PDZ domain; that stretch reads RTTMPKESGA…EPQVEIIVSR (87 aa). Positions 712–746 are disordered; the sequence is RIPESSHPPLESSSSSFESQKMERPSISVISPTSP. Low complexity predominate over residues 714–730; it reads PESSHPPLESSSSSFES. Ser-742 and Ser-745 each carry phosphoserine. Residues 756-879 enclose the C2 1 domain; it reads LPGQLSVKLW…ALLDDEPHWY (124 aa). The disordered stretch occupies residues 884-1201; sequence HDESSLPLPQ…RQLPQVPVRS (318 aa). A Phosphoserine modification is found at Ser-895. Polar residues predominate over residues 949–958; sequence ATTLTVPEQQ. A Phosphoserine modification is found at Ser-991. The span at 1006–1023 shows a compositional bias: basic and acidic residues; it reads RHHDASRSPADHRSRHVE. The residue at position 1045 (Ser-1045) is a Phosphoserine. The segment covering 1078 to 1092 has biased composition (basic and acidic residues); the sequence is SPERERHSRKSERCS. Residues 1173–1187 show a composition bias toward polar residues; it reads QGSPTQSPPADTSFG. A Phosphoserine modification is found at Ser-1175. At Thr-1177 the chain carries Phosphothreonine. Ser-1179, Ser-1231, Ser-1233, Ser-1234, Ser-1262, Ser-1263, and Ser-1265 each carry phosphoserine. Residues 1256–1313 are disordered; that stretch reads DNASAKSSDSDVSDVSAISRASSTSRLSSTSFMSEQSERPRGRISSFTPKMQGRRMGT. Low complexity predominate over residues 1268–1289; sequence SDVSAISRASSTSRLSSTSFMS. At Ser-1339 the chain carries Phosphoserine. Residues 1368–1397 are disordered; it reads RSRSTSQLSQTESGHKKLKSTIQRSTETGM. Positions 1461-1579 constitute a C2 2 domain; it reads AMGDIQIGME…DLSSMVIGWY (119 aa). Ser-1600, Ser-1603, Ser-1606, and Ser-1615 each carry phosphoserine.

Interacts with RAB3C, RAB10, RAB26 and RAB37. Binds SNAP25, SYT1 and CACNA1B. Interaction with SYT1 is enhanced by calcium ions. Interaction with SNAP25 is weaker in the presence of calcium ions. Binds RAB3A, RAB3B and RAB3D that have been activated by GTP-binding. Binds UNC13A. Interacts with TSPOAP1 and RIMBP2. Interacts with PPFIA3 and PPFIA4. Interacts with ERC1. Post-translationally, phosphorylated by BRSK1. In terms of tissue distribution, highly expressed in hippocampus, brain cortex, cerebellum and olfactory bulb. Detected at lower levels in midbrain, hindbrain and spinal cord. Detected retina and in spinal cord motor neurons.

The protein resides in the cell membrane. The protein localises to the synapse. It is found in the presynaptic cell membrane. Functionally, rab effector involved in exocytosis. May act as scaffold protein that regulates neurotransmitter release at the active zone. Essential for maintaining normal probability of neurotransmitter release and for regulating release during short-term synaptic plasticity. Plays a role in dendrite formation by melanocytes. The sequence is that of Regulating synaptic membrane exocytosis protein 1 (Rims1) from Rattus norvegicus (Rat).